The chain runs to 173 residues: Lipoprotein signal peptidase (173 aa).

The next 2 helical transmembrane spans lie at Trp-67–Gly-87 and Met-92–Gly-112. Residues Asp-116 and Asp-132 contribute to the active site. The helical transmembrane segment at Phe-125–Gly-145 threads the bilayer. Residues Ser-151–Gly-173 form a disordered region. Basic and acidic residues predominate over residues Gln-163–Gly-173.

This sequence belongs to the peptidase A8 family.

Its subcellular location is the cell inner membrane. The enzyme catalyses Release of signal peptides from bacterial membrane prolipoproteins. Hydrolyzes -Xaa-Yaa-Zaa-|-(S,diacylglyceryl)Cys-, in which Xaa is hydrophobic (preferably Leu), and Yaa (Ala or Ser) and Zaa (Gly or Ala) have small, neutral side chains.. Its pathway is protein modification; lipoprotein biosynthesis (signal peptide cleavage). In terms of biological role, this protein specifically catalyzes the removal of signal peptides from prolipoproteins. This chain is Lipoprotein signal peptidase, found in Gloeobacter violaceus (strain ATCC 29082 / PCC 7421).